The primary structure comprises 71 residues: U-scoloptoxin(21)-Sm1a (71 aa).

Residues 1-21 form the signal peptide; the sequence is MKSVIFALFLVYLLIVRAAEA. Residues 45 to 71 form a disordered region; that stretch reads IELANDPNGPGRRRRAPAENEDFLKHS. Residues 60–71 show a composition bias toward basic and acidic residues; that stretch reads APAENEDFLKHS.

The protein belongs to the scoloptoxin-21 family. As to expression, expressed by the venom gland.

The protein resides in the secreted. The polypeptide is U-scoloptoxin(21)-Sm1a (Scolopendra morsitans (Tanzanian blue ringleg centipede)).